Consider the following 319-residue polypeptide: ATP-dependent 6-phosphofructokinase (319 aa).

An ATP-binding site is contributed by glycine 11. 21-25 (RAVAR) is an ADP binding site. ATP contacts are provided by residues 72–73 (RY) and 102–105 (GDGS). Aspartate 103 is a binding site for Mg(2+). A substrate-binding site is contributed by 125 to 127 (TID). The active-site Proton acceptor is aspartate 127. Arginine 154 contributes to the ADP binding site. Residues arginine 162 and 169-171 (MGR) contribute to the substrate site. ADP contacts are provided by residues 185-187 (GAE) and arginine 211. Substrate-binding positions include glutamate 222, arginine 243, and 249–252 (HIVR).

Belongs to the phosphofructokinase type A (PFKA) family. ATP-dependent PFK group I subfamily. Prokaryotic clade 'B1' sub-subfamily. As to quaternary structure, homotetramer. Requires Mg(2+) as cofactor.

The protein localises to the cytoplasm. It carries out the reaction beta-D-fructose 6-phosphate + ATP = beta-D-fructose 1,6-bisphosphate + ADP + H(+). Its pathway is carbohydrate degradation; glycolysis; D-glyceraldehyde 3-phosphate and glycerone phosphate from D-glucose: step 3/4. Its activity is regulated as follows. Allosterically activated by ADP and other diphosphonucleosides, and allosterically inhibited by phosphoenolpyruvate. Its function is as follows. Catalyzes the phosphorylation of D-fructose 6-phosphate to fructose 1,6-bisphosphate by ATP, the first committing step of glycolysis. This chain is ATP-dependent 6-phosphofructokinase, found in Lacticaseibacillus casei (strain BL23) (Lactobacillus casei).